Here is a 73-residue protein sequence, read N- to C-terminus: Large ribosomal subunit protein bL28 (73 aa).

The protein belongs to the bacterial ribosomal protein bL28 family.

The polypeptide is Large ribosomal subunit protein bL28 (Buchnera aphidicola subsp. Cinara cedri (strain Cc)).